Consider the following 233-residue polypeptide: V-type proton ATPase subunit E (233 aa).

The protein belongs to the V-ATPase E subunit family. V-ATPase is a heteromultimeric enzyme composed of a peripheral catalytic V1 complex (components A to H) attached to an integral membrane V0 proton pore complex (components: a, c, c', c'' and d).

In terms of biological role, subunit of the peripheral V1 complex of vacuolar ATPase essential for assembly or catalytic function. V-ATPase is responsible for acidifying a variety of intracellular compartments in eukaryotic cells. In Dictyostelium discoideum (Social amoeba), this protein is V-type proton ATPase subunit E (vatE).